The primary structure comprises 78 residues: MAATCQVTGAVPGFGHNISHSHRRTKRRFDPNVQKKTYYVPSLRRNVKLTLSAKGIKVIDARGIESVVKDILARGVKI.

Belongs to the bacterial ribosomal protein bL28 family.

This Clavibacter michiganensis subsp. michiganensis (strain NCPPB 382) protein is Large ribosomal subunit protein bL28.